The sequence spans 236 residues: Baculoviral IAP repeat-containing protein 8 (236 aa).

The BIR repeat unit spans residues 7 to 70 (RLITFGTWMY…KWYPGCKYLL (64 aa)). Cysteine 39, cysteine 42, histidine 59, and cysteine 66 together coordinate Zn(2+). An RING-type zinc finger spans residues 189-224 (CKICMDRHIAVVFIPCGHLVTCKQCAEAVDRCPMCS).

This sequence belongs to the IAP family. As to quaternary structure, binds to caspase-9. Testis specific in normal tissues.

It localises to the cytoplasm. Its function is as follows. Protects against apoptosis mediated by BAX. In Homo sapiens (Human), this protein is Baculoviral IAP repeat-containing protein 8 (BIRC8).